Reading from the N-terminus, the 457-residue chain is Bifunctional protein GlmU (457 aa).

Residues Met-1 to Arg-232 form a pyrophosphorylase region. UDP-N-acetyl-alpha-D-glucosamine is bound by residues Leu-9 to Gly-12, Lys-23, Gln-75, and Gly-80 to Thr-81. Asp-105 is a binding site for Mg(2+). Gly-142, Glu-157, Asn-172, and Asn-230 together coordinate UDP-N-acetyl-alpha-D-glucosamine. Asn-230 contributes to the Mg(2+) binding site. Positions Val-233–Ala-253 are linker. An N-acetyltransferase region spans residues Gly-254–Lys-457. UDP-N-acetyl-alpha-D-glucosamine contacts are provided by Arg-336 and Lys-354. Catalysis depends on His-366, which acts as the Proton acceptor. Residues Tyr-369 and Asn-380 each contribute to the UDP-N-acetyl-alpha-D-glucosamine site. Acetyl-CoA contacts are provided by residues Asn-389 to Tyr-390, Ser-408, Ala-426, and Arg-443.

This sequence in the N-terminal section; belongs to the N-acetylglucosamine-1-phosphate uridyltransferase family. It in the C-terminal section; belongs to the transferase hexapeptide repeat family. Homotrimer. The cofactor is Mg(2+).

It is found in the cytoplasm. The catalysed reaction is alpha-D-glucosamine 1-phosphate + acetyl-CoA = N-acetyl-alpha-D-glucosamine 1-phosphate + CoA + H(+). The enzyme catalyses N-acetyl-alpha-D-glucosamine 1-phosphate + UTP + H(+) = UDP-N-acetyl-alpha-D-glucosamine + diphosphate. It functions in the pathway nucleotide-sugar biosynthesis; UDP-N-acetyl-alpha-D-glucosamine biosynthesis; N-acetyl-alpha-D-glucosamine 1-phosphate from alpha-D-glucosamine 6-phosphate (route II): step 2/2. The protein operates within nucleotide-sugar biosynthesis; UDP-N-acetyl-alpha-D-glucosamine biosynthesis; UDP-N-acetyl-alpha-D-glucosamine from N-acetyl-alpha-D-glucosamine 1-phosphate: step 1/1. Its pathway is bacterial outer membrane biogenesis; LPS lipid A biosynthesis. Catalyzes the last two sequential reactions in the de novo biosynthetic pathway for UDP-N-acetylglucosamine (UDP-GlcNAc). The C-terminal domain catalyzes the transfer of acetyl group from acetyl coenzyme A to glucosamine-1-phosphate (GlcN-1-P) to produce N-acetylglucosamine-1-phosphate (GlcNAc-1-P), which is converted into UDP-GlcNAc by the transfer of uridine 5-monophosphate (from uridine 5-triphosphate), a reaction catalyzed by the N-terminal domain. In Geotalea daltonii (strain DSM 22248 / JCM 15807 / FRC-32) (Geobacter daltonii), this protein is Bifunctional protein GlmU.